A 987-amino-acid chain; its full sequence is AP3-complex subunit beta-A (987 aa).

The interval Gln-586 to Gln-662 is disordered. A compositionally biased stretch (acidic residues) spans Asp-603 to Asp-613. Over residues Glu-614–Ser-631 the composition is skewed to low complexity.

The protein belongs to the adaptor complexes large subunit family. As to quaternary structure, adaptor protein complex 3 (AP-3) is a heterotetramer composed of two large adaptins (delta-type subunit and beta-type subunit), a medium adaptin (mu-type subunit) and a small adaptin (sigma-type subunit).

It localises to the cytoplasm. The protein localises to the golgi apparatus. It is found in the cytoplasmic vesicle membrane. Functionally, part of the AP-3 complex, an adaptor-related complex which seems to be clathrin-associated. The complex is associated with the Golgi region as well as more peripheral structures. It facilitates the budding of vesicles from the Golgi membrane and may be directly involved in trafficking to the vacuole. It also function in maintaining the identity of lytic vacuoles and in regulating the transition between storage and lytic vacuoles. This chain is AP3-complex subunit beta-A (AP3BA), found in Arabidopsis thaliana (Mouse-ear cress).